The primary structure comprises 277 residues: Undecaprenyl-diphosphatase (277 aa).

The next 7 membrane-spanning stretches (helical) occupy residues 3–23 (YIIELIKYIILGIIQGVTEIF), 48–68 (LTLFLMITNMGSFLALLIYYF), 97–117 (ISYAVKLIIAIVPIGIAGLLI), 125–145 (LLSIGISLIITSLLLFLVFLL), 198–218 (SFLCYLLISIPVSGLGLYDAI), 227–247 (IPGFSLAFIFSFIFSLLTIKI), and 257–277 (LIWFSLYALTVGLVSITLYII).

This sequence belongs to the UppP family.

It localises to the cell membrane. The catalysed reaction is di-trans,octa-cis-undecaprenyl diphosphate + H2O = di-trans,octa-cis-undecaprenyl phosphate + phosphate + H(+). Its function is as follows. Catalyzes the dephosphorylation of undecaprenyl diphosphate (UPP). Confers resistance to bacitracin. The protein is Undecaprenyl-diphosphatase of Acholeplasma laidlawii (strain PG-8A).